The primary structure comprises 144 residues: Putative sugar phosphate isomerase RBE_0278 (144 aa).

H12 provides a ligand contact to substrate. H101 (proton donor) is an active-site residue. R135 provides a ligand contact to substrate.

It belongs to the LacAB/RpiB family.

This is Putative sugar phosphate isomerase RBE_0278 from Rickettsia bellii (strain RML369-C).